The primary structure comprises 57 residues: Potassium channel toxin alpha-KTx 8.7 (57 aa).

The N-terminal stretch at 1–28 (MSRLYAIILIALVFNVIMTIMPDMKVEA) is a signal peptide. 3 cysteine pairs are disulfide-bonded: Cys31–Cys47, Cys34–Cys52, and Cys38–Cys54.

In terms of tissue distribution, expressed by the venom gland.

It is found in the secreted. In terms of biological role, inhibits voltage-gated potassium channel rKv1.1/KCNA1 at nanomolar ranges (IC(50)=8.5 nM). This Mesobuthus eupeus (Lesser Asian scorpion) protein is Potassium channel toxin alpha-KTx 8.7.